An 84-amino-acid chain; its full sequence is Seminal ribonuclease (84 aa).

3 cysteine pairs are disulfide-bonded: cysteine 10-cysteine 65, cysteine 28-cysteine 80, and cysteine 35-cysteine 42. Substrate is bound by residues 11–15, lysine 36, and arginine 55; that span reads KPVNT.

It belongs to the pancreatic ribonuclease family. In terms of assembly, homodimer; disulfide-linked.

The protein resides in the secreted. The enzyme catalyses an [RNA] containing cytidine + H2O = an [RNA]-3'-cytidine-3'-phosphate + a 5'-hydroxy-ribonucleotide-3'-[RNA].. It carries out the reaction an [RNA] containing uridine + H2O = an [RNA]-3'-uridine-3'-phosphate + a 5'-hydroxy-ribonucleotide-3'-[RNA].. This is Seminal ribonuclease (SRN) from Giraffa camelopardalis (Giraffe).